We begin with the raw amino-acid sequence, 613 residues long: MPDYRSKTSTQGRNMAGARALWRATGMKDEDFKKPIIAIANSFTQFVPGHVHLKDLGQLVAREIERAGGVAKEFNTIAVDDGIAMGHDGMLYSLPSREIIADAVEYMVNAHCADAIVCISNCDKITPGMLMAALRLNIPVIFVSGGPMEAGKTKLASHGLDLVDAMVIAADSTASDEKVAEYERSACPTCGSCSGMFTANSMNCLTEALGLALPGNGSTLATHSDREQLFLTAGRTIVELCKRYYGENDESVLPRSIANFKAFENAMMLDIAMGGSTNTILHLLAAAQEGEVAFDLRDIDRLSRKVPQLCKVAPNIQNYHMEDVHRAGGIFSILGSLARGGLLHTDLPTVHSRSMEEAIAKWDITQTDDEAVHTFFKAGPAGIPTQTAFSQSTRWETLDDDRENGCIRSFEHAYSQEGGLAVLYGNIALDGCVVKTAGVDESIHVFEGTAKIFESQDSAVRGILADEVKAGDIVIIRYEGPKGGPGMQEMLYPTSYLKSKGLGKACALLTDGRFSGGTSGLSIGHASPEAAAGGAIGLVRDGDKVLIDIPNRSINLLVSDEELAERRVEQDKKGWKPAEVRPRKVTTALKAYALLATSADKGAVRNKAMLEGL.

A Mg(2+)-binding site is contributed by aspartate 81. Residue cysteine 122 participates in [2Fe-2S] cluster binding. Positions 123 and 124 each coordinate Mg(2+). The residue at position 124 (lysine 124) is an N6-carboxylysine. Cysteine 193 lines the [2Fe-2S] cluster pocket. Glutamate 489 is a binding site for Mg(2+). Serine 515 functions as the Proton acceptor in the catalytic mechanism.

It belongs to the IlvD/Edd family. Homodimer. Requires [2Fe-2S] cluster as cofactor. Mg(2+) serves as cofactor.

It catalyses the reaction (2R)-2,3-dihydroxy-3-methylbutanoate = 3-methyl-2-oxobutanoate + H2O. The enzyme catalyses (2R,3R)-2,3-dihydroxy-3-methylpentanoate = (S)-3-methyl-2-oxopentanoate + H2O. The protein operates within amino-acid biosynthesis; L-isoleucine biosynthesis; L-isoleucine from 2-oxobutanoate: step 3/4. It participates in amino-acid biosynthesis; L-valine biosynthesis; L-valine from pyruvate: step 3/4. Its function is as follows. Functions in the biosynthesis of branched-chain amino acids. Catalyzes the dehydration of (2R,3R)-2,3-dihydroxy-3-methylpentanoate (2,3-dihydroxy-3-methylvalerate) into 2-oxo-3-methylpentanoate (2-oxo-3-methylvalerate) and of (2R)-2,3-dihydroxy-3-methylbutanoate (2,3-dihydroxyisovalerate) into 2-oxo-3-methylbutanoate (2-oxoisovalerate), the penultimate precursor to L-isoleucine and L-valine, respectively. In Pseudomonas putida (strain ATCC 700007 / DSM 6899 / JCM 31910 / BCRC 17059 / LMG 24140 / F1), this protein is Dihydroxy-acid dehydratase.